A 114-amino-acid chain; its full sequence is MSDDMALPLQFTDAAANKVKDLIADEENPNLRLRVYITGGGCSGFQYGFTFDDAMNEGDMTIEKQGVALVIDPMSLQYLVGGCVDYTEGLEGSRFIVTNPNAKSTCGCGSSFSI.

Iron-sulfur cluster-binding residues include C42, C106, and C108.

It belongs to the HesB/IscA family. As to quaternary structure, homodimer. It depends on iron-sulfur cluster as a cofactor.

In terms of biological role, required for insertion of 4Fe-4S clusters for at least IspG. This chain is Iron-sulfur cluster insertion protein ErpA, found in Proteus mirabilis (strain HI4320).